Reading from the N-terminus, the 485-residue chain is Cysteine--tRNA ligase (485 aa).

Cys27 is a Zn(2+) binding site. Positions 29-39 match the 'HIGH' region motif; that stretch reads ITAYDLCHIGH. Residues Cys208, His233, and Glu237 each contribute to the Zn(2+) site. The short motif at 265-269 is the 'KMSKS' region element; that stretch reads KMSKS. An ATP-binding site is contributed by Lys268.

The protein belongs to the class-I aminoacyl-tRNA synthetase family. As to quaternary structure, monomer. Zn(2+) serves as cofactor.

It localises to the cytoplasm. The enzyme catalyses tRNA(Cys) + L-cysteine + ATP = L-cysteinyl-tRNA(Cys) + AMP + diphosphate. This Nitratidesulfovibrio vulgaris (strain DP4) (Desulfovibrio vulgaris) protein is Cysteine--tRNA ligase.